Here is a 723-residue protein sequence, read N- to C-terminus: F-box protein MAX2 homolog B (723 aa).

The F-box domain occupies 2 to 55; the sequence is AKTPIPFTTLNDLPDVILSNIIAAVSDTRSRNATALVCHKWLVLERSTRTSLTL.

In terms of assembly, part of a putative SCF (SKP1/Cullin/F-box) ubiquitin ligase complex. Interacts with KAI2IA in the presence of (-)-germacrene D. Mainly expressed in fully expanded leaves, lateral roots, axillary and shoot apex, and, to a lower extent, in internodes and nodes.

It is found in the nucleus. The protein resides in the cytoplasm. In terms of biological role, component of SCF(ASK-cullin-F-box) E3 ubiquitin ligase complexes, which may mediate the ubiquitination and subsequent proteasomal degradation of target proteins. Is necessary for responses to strigolactones and may be involved in the ubiquitin-mediated degradation of specific proteins that activate axillary growth. Targets probably SMAX1A to degradation upon the formation of an E3 SCF ubiquitin ligase complex (ASK-cullin-F-box) containing MAX2B and KAI2IA in response to (-)-germacrene D in the stigma. This Petunia hybrida (Petunia) protein is F-box protein MAX2 homolog B.